A 424-amino-acid chain; its full sequence is Interleukin-13 receptor subunit alpha-1 (424 aa).

Positions 1–25 (MARPALLGELLVLLLWTATVGQVAA) are cleaved as a signal peptide. Residues 26 to 340 (ATEVQPPVTN…QSIGKEQNST (315 aa)) lie on the Extracellular side of the membrane. The region spanning 32-121 (PVTNLSVSVE…VKKCISPPEG (90 aa)) is the Fibronectin type-III 1 domain. N35, N59, N103, and N136 each carry an N-linked (GlcNAc...) asparagine glycan. The cysteines at positions 44 and 93 are disulfide-linked. Disulfide bonds link C132–C142 and C171–C183. One can recognise a Fibronectin type-III 2 domain in the interval 224–336 (KPDPPHIKHL…WSEAQSIGKE (113 aa)). N-linked (GlcNAc...) asparagine glycosylation is present at N262. The short motif at 324–328 (WSDWS) is the WSXWS motif element. N338 is a glycosylation site (N-linked (GlcNAc...) asparagine). A helical transmembrane segment spans residues 341-364 (FYTTMLLTIPVFVAVAVIILLFYL). Over 365–424 (KRLKIIIFPPIPDPGKIFKEMFGDQNDDTLHWKKYDIYEKQSKEETDSVVLIENLKKAAP) the chain is Cytoplasmic. Residues 371-379 (IFPPIPDPG) carry the Box 1 motif motif.

Belongs to the type I cytokine receptor family. Type 5 subfamily. In terms of assembly, interleukin-13 receptor is a complex of IL4R, IL13RA1, and possibly other components. Interacts with TRAF3IP1. Interacts with IL4. Spleen, liver, thymus, heart, lung, kidney, testis, stomach, brain, skin, and colon; but not skeletal muscle.

The protein resides in the membrane. In terms of biological role, binds with low affinity to interleukin-13 (IL13). Together with IL4RA can form a functional receptor for IL13. Also serves as an alternate accessory protein to the common cytokine receptor gamma chain for interleukin-4 (IL4) signaling, but cannot replace the function of IL2RG in allowing enhanced interleukin-2 (IL2) binding activity. The polypeptide is Interleukin-13 receptor subunit alpha-1 (Il13ra1) (Mus musculus (Mouse)).